The following is a 348-amino-acid chain: Phospho-N-acetylmuramoyl-pentapeptide-transferase (348 aa).

10 helical membrane passes run 11–31, 68–88, 92–112, 128–148, 165–185, 196–216, 222–242, 251–271, 276–296, and 326–346; these read SWML…IFLG, AGGI…LPLG, TWLF…DDII, FVIQ…IYKG, VGHS…TIVG, LDGL…VVAL, PLAQ…FAFL, VFMG…CAVM, LLLI…ILQV, and VVAR…IAAL.

Belongs to the glycosyltransferase 4 family. MraY subfamily. Mg(2+) is required as a cofactor.

Its subcellular location is the cell inner membrane. It catalyses the reaction UDP-N-acetyl-alpha-D-muramoyl-L-alanyl-gamma-D-glutamyl-meso-2,6-diaminopimeloyl-D-alanyl-D-alanine + di-trans,octa-cis-undecaprenyl phosphate = di-trans,octa-cis-undecaprenyl diphospho-N-acetyl-alpha-D-muramoyl-L-alanyl-D-glutamyl-meso-2,6-diaminopimeloyl-D-alanyl-D-alanine + UMP. It participates in cell wall biogenesis; peptidoglycan biosynthesis. Its function is as follows. Catalyzes the initial step of the lipid cycle reactions in the biosynthesis of the cell wall peptidoglycan: transfers peptidoglycan precursor phospho-MurNAc-pentapeptide from UDP-MurNAc-pentapeptide onto the lipid carrier undecaprenyl phosphate, yielding undecaprenyl-pyrophosphoryl-MurNAc-pentapeptide, known as lipid I. In Chlamydia caviae (strain ATCC VR-813 / DSM 19441 / 03DC25 / GPIC) (Chlamydophila caviae), this protein is Phospho-N-acetylmuramoyl-pentapeptide-transferase.